The primary structure comprises 1216 residues: Coatomer subunit alpha-1 (1216 aa).

WD repeat units lie at residues 7–48, 49–88, 91–132, 133–172, 202–241, 246–285, 288–326, and 363–404; these read TKSN…DRFD, EHEG…CLFT, GHLD…SVLT, GHNH…KKTV, GHDR…AWEV, GHMN…GLQT, REHD…PAFA, and SLNQ…VGRS.

Oligomeric complex that consists of at least the alpha, beta, beta', gamma, delta, epsilon and zeta subunits.

It localises to the cytoplasm. Its subcellular location is the golgi apparatus membrane. It is found in the cytoplasmic vesicle. The protein resides in the COPI-coated vesicle membrane. Its function is as follows. The coatomer is a cytosolic protein complex that binds to dilysine motifs and reversibly associates with Golgi non-clathrin-coated vesicles, which further mediate biosynthetic protein transport from the ER, via the Golgi up to the trans Golgi network. Coatomer complex is required for budding from Golgi membranes, and is essential for the retrograde Golgi-to-ER transport of dilysine-tagged proteins. The polypeptide is Coatomer subunit alpha-1 (Arabidopsis thaliana (Mouse-ear cress)).